We begin with the raw amino-acid sequence, 651 residues long: F-box only protein 43 (651 aa).

Disordered stretches follow at residues 14 to 42 (MTAG…LKGF) and 140 to 171 (LRRI…TSTL). Residues 27 to 36 (TSVSQDSGYS) are compositionally biased toward polar residues. Phosphoserine; by PLK1 is present on Ser-33. Thr-195 carries the phosphothreonine; by CaMK2 modification. Positions 424–499 (SGCFELPEDS…QDKSAHQRRK (76 aa)) constitute an F-box domain. A ZBR-type zinc finger spans residues 579-627 (ALKPCPRCQYPAKYQALKKRGTCSRKDCGFDFCSLCLCTFHGSKECGTG). Zn(2+) is bound by residues Cys-583, Cys-586, Cys-601, Cys-606, Cys-611, Cys-614, His-619, and Cys-624.

In terms of assembly, part of a SCF (SKP1-cullin-F-box) protein ligase complex. Interaction with SKP1 does not occur. Phosphorylated on Thr-195 by CaMK2 in response to calcium during egg activation, which promotes subsequent phosphorylation by PLK1, ubiquitination and protesomal degradation. Post-translationally, ubiquitinated by FBXW1 during egg activation, which promotes proteasomal degradation.

The protein operates within protein modification; protein ubiquitination. In terms of biological role, required to prevent anaphase onset in cytostatic factor-arrested oocytes. Inhibits the anaphase-promoting complex/cyclosome (APC/C) ubiquitin ligase and prevents cyclin degradation. Probably recognizes and binds to some phosphorylated proteins and promotes their ubiquitination and degradation. The polypeptide is F-box only protein 43 (fbxo43) (Xenopus laevis (African clawed frog)).